An 801-amino-acid chain; its full sequence is Glycerol-3-phosphate acyltransferase 2, mitochondrial (801 aa).

The segment at 1–24 (MDTMLKSNPQTQQRSNHNGQETSL) is disordered. Topologically, residues 1–305 (MDTMLKSNPQ…PGPRLSALGQ (305 aa)) are cytoplasmic. Residues 180–290 (QLHKGQMKMV…SGQPLLIFLE (111 aa)) are acyltransferase. The short motif at 205-210 (HKSLLD) is the HXXXXD motif element. The helical transmembrane segment at 306–332 (AWLGVVIQAVQAGIISDATLVPVAIAY) threads the bilayer. The Mitochondrial intermembrane segment spans residues 333–449 (DLVPDAPCNM…QLLVRRLSRH (117 aa)). The chain crosses the membrane as a helical span at residues 450 to 472 (VLSASVASSAVMSTAIMATLLLL). Topologically, residues 473–801 (KHQKGVVLSQ…EQFIRQFICS (329 aa)) are cytoplasmic. Serine 662 carries the post-translational modification Phosphoserine. A Phosphothreonine modification is found at threonine 666. Phosphoserine is present on residues serine 668 and serine 670.

The protein belongs to the GPAT/DAPAT family. Interacts with PIWIL2. Highly expressed in the testis. Expressed at lower levels in the heart, liver, kidney, spleen and adipose cells. Only detected in primary spermatocytes.

Its subcellular location is the mitochondrion outer membrane. It carries out the reaction sn-glycerol 3-phosphate + an acyl-CoA = a 1-acyl-sn-glycero-3-phosphate + CoA. The catalysed reaction is a 1-acyl-sn-glycero-3-phosphate + an acyl-CoA = a 1,2-diacyl-sn-glycero-3-phosphate + CoA. The enzyme catalyses 1-(9Z-octadecenoyl)-sn-glycero-3-phosphate + (9Z)-octadecenoyl-CoA = 1,2-di-(9Z-octadecenoyl)-sn-glycero-3-phosphate + CoA. It catalyses the reaction 1-(9Z-octadecenoyl)-sn-glycero-3-phosphate + (5Z,8Z,11Z,14Z)-eicosatetraenoyl-CoA = 1-(9Z)-octadecenoyl-2-(5Z,8Z,11Z,14Z)-eicosatetraenoyl-sn-glycero-3-phosphate + CoA. It carries out the reaction (5Z,8Z,11Z,14Z)-eicosatetraenoyl-CoA + sn-glycerol 3-phosphate = 1-(5Z,8Z,11Z,14Z-eicosatetraenoyl)-sn-glycero-3-phosphate + CoA. The protein operates within phospholipid metabolism; CDP-diacylglycerol biosynthesis; CDP-diacylglycerol from sn-glycerol 3-phosphate: step 1/3. With respect to regulation, inhibited by N-ethylmaleimide (NEM). Functionally, transfers an acyl-group from acyl-ACP to the sn-1 position of glycerol-3-phosphate producing a lysophosphatidic acid (LPA), an essential step for the triacylglycerol (TAG) and glycerophospholipids. In vitro also transfers an acyl-group from acyl-ACP to the LPA producing a phosphatidic acid (PA). Prefers arachidonoyl-CoA as the acyl donor. Required for primary processing step during piRNA biosynthesis. Molecular mechanisms by which it promotes piRNA biosynthesis are unclear and do not involve its acyltransferase activity. The protein is Glycerol-3-phosphate acyltransferase 2, mitochondrial of Mus musculus (Mouse).